The chain runs to 118 residues: Large ribosomal subunit protein uL22 (118 aa).

Belongs to the universal ribosomal protein uL22 family. Part of the 50S ribosomal subunit.

This protein binds specifically to 23S rRNA; its binding is stimulated by other ribosomal proteins, e.g. L4, L17, and L20. It is important during the early stages of 50S assembly. It makes multiple contacts with different domains of the 23S rRNA in the assembled 50S subunit and ribosome. Its function is as follows. The globular domain of the protein is located near the polypeptide exit tunnel on the outside of the subunit, while an extended beta-hairpin is found that lines the wall of the exit tunnel in the center of the 70S ribosome. The protein is Large ribosomal subunit protein uL22 of Synechococcus sp. (strain RCC307).